The primary structure comprises 409 residues: Serine/threonine transporter SstT (409 aa).

The next 9 helical transmembrane spans lie at 17-37 (LVGQIIVGLIAGLLLASFFPA), 49-69 (FVSALKAVAPVLVFVLVMASI), 83-103 (ILLLYLVGTFSAAVVAVIASF), 142-162 (ALISANFIGILAWAIGLGIAF), 180-200 (VSLIVKVVIRFAPLGIFGLVA), 218-238 (LVVLLGCMLFVAFVVNPLIVF), 301-321 (GAAITITVLTLAAVHTLGIAV), 331-351 (VVASICACGASGVAGGSLLLI), and 357-377 (LFGIPSEVAMQVVAVGFIIAI).

Belongs to the dicarboxylate/amino acid:cation symporter (DAACS) (TC 2.A.23) family.

Its subcellular location is the cell inner membrane. It carries out the reaction L-serine(in) + Na(+)(in) = L-serine(out) + Na(+)(out). The catalysed reaction is L-threonine(in) + Na(+)(in) = L-threonine(out) + Na(+)(out). In terms of biological role, involved in the import of serine and threonine into the cell, with the concomitant import of sodium (symport system). This chain is Serine/threonine transporter SstT, found in Pseudomonas aeruginosa (strain LESB58).